The chain runs to 1226 residues: Cytosolic carboxypeptidase 1 (1226 aa).

Residues 599-619 (TEDDEDTESNSSVEQASVEVP) are disordered. Positions 848-1138 (YPYTYSTLQM…KFCVGLLRLK (291 aa)) constitute a Peptidase M14 domain. Zn(2+) contacts are provided by H920, E923, and H1017. E1102 (proton donor/acceptor) is an active-site residue. S1168 carries the post-translational modification Phosphoserine. The interval 1206–1226 (YEPSAQEEVLSDSELSRTYLP) is disordered.

The protein belongs to the peptidase M14 family. Interacts with MYLK. Zn(2+) is required as a cofactor.

The protein localises to the cytoplasm. It is found in the cytosol. Its subcellular location is the nucleus. The protein resides in the mitochondrion. It carries out the reaction (L-glutamyl)(n+1)-gamma-L-glutamyl-L-glutamyl-[protein] + H2O = (L-glutamyl)(n)-gamma-L-glutamyl-L-glutamyl-[protein] + L-glutamate. The enzyme catalyses C-terminal L-alpha-aminoacyl-L-glutamyl-L-glutamyl-[tubulin] + H2O = C-terminal L-alpha-aminoacyl-L-glutamyl-[tubulin] + L-glutamate. In terms of biological role, metallocarboxypeptidase that mediates protein deglutamylation of tubulin and non-tubulin target proteins. Catalyzes the removal of polyglutamate side chains present on the gamma-carboxyl group of glutamate residues within the C-terminal tail of alpha- and beta-tubulin. Specifically cleaves tubulin long-side-chains, while it is not able to remove the branching point glutamate. Also catalyzes the removal of polyglutamate residues from the carboxy-terminus of alpha-tubulin as well as non-tubulin proteins such as MYLK. Involved in KLF4 deglutamylation which promotes KLF4 proteasome-mediated degradation, thereby negatively regulating cell pluripotency maintenance and embryogenesis. In Homo sapiens (Human), this protein is Cytosolic carboxypeptidase 1.